Consider the following 612-residue polypeptide: Dihydroxy-acid dehydratase (612 aa).

D81 contacts Mg(2+). Position 122 (C122) interacts with [2Fe-2S] cluster. Mg(2+) is bound by residues D123 and K124. K124 carries the N6-carboxylysine modification. Position 193 (C193) interacts with [2Fe-2S] cluster. Position 489 (E489) interacts with Mg(2+). S515 (proton acceptor) is an active-site residue.

This sequence belongs to the IlvD/Edd family. As to quaternary structure, homodimer. It depends on [2Fe-2S] cluster as a cofactor. Mg(2+) serves as cofactor.

It carries out the reaction (2R)-2,3-dihydroxy-3-methylbutanoate = 3-methyl-2-oxobutanoate + H2O. The catalysed reaction is (2R,3R)-2,3-dihydroxy-3-methylpentanoate = (S)-3-methyl-2-oxopentanoate + H2O. It functions in the pathway amino-acid biosynthesis; L-isoleucine biosynthesis; L-isoleucine from 2-oxobutanoate: step 3/4. It participates in amino-acid biosynthesis; L-valine biosynthesis; L-valine from pyruvate: step 3/4. Functions in the biosynthesis of branched-chain amino acids. Catalyzes the dehydration of (2R,3R)-2,3-dihydroxy-3-methylpentanoate (2,3-dihydroxy-3-methylvalerate) into 2-oxo-3-methylpentanoate (2-oxo-3-methylvalerate) and of (2R)-2,3-dihydroxy-3-methylbutanoate (2,3-dihydroxyisovalerate) into 2-oxo-3-methylbutanoate (2-oxoisovalerate), the penultimate precursor to L-isoleucine and L-valine, respectively. The sequence is that of Dihydroxy-acid dehydratase from Pseudomonas aeruginosa (strain LESB58).